Consider the following 45-residue polypeptide: Large ribosomal subunit protein bL34 (45 aa).

Belongs to the bacterial ribosomal protein bL34 family.

The sequence is that of Large ribosomal subunit protein bL34 from Kocuria rhizophila (strain ATCC 9341 / DSM 348 / NBRC 103217 / DC2201).